The following is a 571-amino-acid chain: Proline--tRNA ligase (571 aa).

The protein belongs to the class-II aminoacyl-tRNA synthetase family. ProS type 1 subfamily. As to quaternary structure, homodimer.

The protein resides in the cytoplasm. The enzyme catalyses tRNA(Pro) + L-proline + ATP = L-prolyl-tRNA(Pro) + AMP + diphosphate. In terms of biological role, catalyzes the attachment of proline to tRNA(Pro) in a two-step reaction: proline is first activated by ATP to form Pro-AMP and then transferred to the acceptor end of tRNA(Pro). As ProRS can inadvertently accommodate and process non-cognate amino acids such as alanine and cysteine, to avoid such errors it has two additional distinct editing activities against alanine. One activity is designated as 'pretransfer' editing and involves the tRNA(Pro)-independent hydrolysis of activated Ala-AMP. The other activity is designated 'posttransfer' editing and involves deacylation of mischarged Ala-tRNA(Pro). The misacylated Cys-tRNA(Pro) is not edited by ProRS. The protein is Proline--tRNA ligase of Aliivibrio salmonicida (strain LFI1238) (Vibrio salmonicida (strain LFI1238)).